We begin with the raw amino-acid sequence, 282 residues long: ATP phosphoribosyltransferase (282 aa).

Belongs to the ATP phosphoribosyltransferase family. Long subfamily. Mg(2+) is required as a cofactor.

It localises to the cytoplasm. The catalysed reaction is 1-(5-phospho-beta-D-ribosyl)-ATP + diphosphate = 5-phospho-alpha-D-ribose 1-diphosphate + ATP. Its pathway is amino-acid biosynthesis; L-histidine biosynthesis; L-histidine from 5-phospho-alpha-D-ribose 1-diphosphate: step 1/9. Feedback inhibited by histidine. Functionally, catalyzes the condensation of ATP and 5-phosphoribose 1-diphosphate to form N'-(5'-phosphoribosyl)-ATP (PR-ATP). Has a crucial role in the pathway because the rate of histidine biosynthesis seems to be controlled primarily by regulation of HisG enzymatic activity. The chain is ATP phosphoribosyltransferase from Haloarcula marismortui (strain ATCC 43049 / DSM 3752 / JCM 8966 / VKM B-1809) (Halobacterium marismortui).